Consider the following 239-residue polypeptide: Xyloglucan-specific endo-beta-1,4-glucanase A (239 aa).

An N-terminal signal peptide occupies residues 1 to 14 (MKLLALSLASLASA). N-linked (GlcNAc...) asparagine glycosylation is present at N172.

This sequence belongs to the glycosyl hydrolase 12 (cellulase H) family.

The protein resides in the secreted. It carries out the reaction xyloglucan + H2O = xyloglucan oligosaccharides.. Functionally, catalyzes endohydrolysis of 1,4-beta-D-glucosidic linkages in xyloglucan with retention of the beta-configuration of the glycosyl residues. Specific for xyloglucan and does not hydrolyze other cell wall components. Active against tamarind xyloglucan. The polypeptide is Xyloglucan-specific endo-beta-1,4-glucanase A (xgeA) (Emericella nidulans (strain FGSC A4 / ATCC 38163 / CBS 112.46 / NRRL 194 / M139) (Aspergillus nidulans)).